A 211-amino-acid chain; its full sequence is Redox-sensing transcriptional repressor Rex (211 aa).

A DNA-binding region (H-T-H motif) is located at residues 18–57 (LYYRFLENLHASGKQRVSSSELSEAVKVDSATIRRDFSYF). 92–97 (GVGNLG) serves as a coordination point for NAD(+).

This sequence belongs to the transcriptional regulatory Rex family. As to quaternary structure, homodimer.

The protein localises to the cytoplasm. Modulates transcription in response to changes in cellular NADH/NAD(+) redox state. The sequence is that of Redox-sensing transcriptional repressor Rex from Halalkalibacterium halodurans (strain ATCC BAA-125 / DSM 18197 / FERM 7344 / JCM 9153 / C-125) (Bacillus halodurans).